Reading from the N-terminus, the 137-residue chain is Small heat shock protein IbpA (137 aa).

A sHSP domain is found at 28–137 (TQSNGGYPPY…AMKPRRIEIK (110 aa)).

It belongs to the small heat shock protein (HSP20) family. In terms of assembly, monomer. Forms homomultimers of about 100-150 subunits at optimal growth temperatures. Conformation changes to monomers at high temperatures or high ionic concentrations.

It localises to the cytoplasm. Associates with aggregated proteins, together with IbpB, to stabilize and protect them from irreversible denaturation and extensive proteolysis during heat shock and oxidative stress. Aggregated proteins bound to the IbpAB complex are more efficiently refolded and reactivated by the ATP-dependent chaperone systems ClpB and DnaK/DnaJ/GrpE. Its activity is ATP-independent. The sequence is that of Small heat shock protein IbpA from Pectobacterium atrosepticum (strain SCRI 1043 / ATCC BAA-672) (Erwinia carotovora subsp. atroseptica).